Reading from the N-terminus, the 785-residue chain is Endonuclease MutS2 (785 aa).

An ATP-binding site is contributed by 334-341; sequence GPNTGGKT. Residues 710–785 enclose the Smr domain; that stretch reads LDLRGKRYEE…GNGATIVHFK (76 aa).

This sequence belongs to the DNA mismatch repair MutS family. MutS2 subfamily. As to quaternary structure, homodimer. Binds to stalled ribosomes, contacting rRNA.

In terms of biological role, endonuclease that is involved in the suppression of homologous recombination and thus may have a key role in the control of bacterial genetic diversity. Acts as a ribosome collision sensor, splitting the ribosome into its 2 subunits. Detects stalled/collided 70S ribosomes which it binds and splits by an ATP-hydrolysis driven conformational change. Acts upstream of the ribosome quality control system (RQC), a ribosome-associated complex that mediates the extraction of incompletely synthesized nascent chains from stalled ribosomes and their subsequent degradation. Probably generates substrates for RQC. The sequence is that of Endonuclease MutS2 from Pediococcus pentosaceus (strain ATCC 25745 / CCUG 21536 / LMG 10740 / 183-1w).